A 273-amino-acid chain; its full sequence is Outer surface protein A (273 aa).

The signal sequence occupies residues 1-16 (MKKYLLGIGLILALIA). Cys17 carries N-palmitoyl cysteine lipidation. Cys17 carries the S-diacylglycerol cysteine lipid modification.

Belongs to the OspA lipoprotein family.

Its subcellular location is the cell outer membrane. The protein localises to the cell surface. The sequence is that of Outer surface protein A from Borreliella burgdorferi (strain N40) (Borrelia burgdorferi).